The primary structure comprises 415 residues: E3 ubiquitin-protein ligase RNF135 (415 aa).

Residues 21–67 form an RING-type zinc finger; that stretch reads CIICQGLLDWPTTLPCGHSFCLQCLKDLWVSKRAGVDSCPWACPICR. Residues 181–206 are a coiled coil; it reads TFSASQKKIQEILRDLEKIQETLQGS. Residues 228-415 enclose the B30.2/SPRY domain; it reads PDQRYPVSRK…LTPGNYLEIL (188 aa).

In terms of assembly, homodimer. Interacts (homodimer) with RIGI (double-stranded RNA-bound oligomeric form); involved in both RIGI ubiquitination, oligomerization into filaments associated with viral RNAs and the bridging of these filaments. Interacts with UBE2D3 and UBE2N; E2 ubiquitin ligases involved in RNF135-mediated ubiquitination of RIGI and activation of the RIG-I signaling pathway. Interacts with PCBP2.

The protein resides in the cytoplasm. Its subcellular location is the stress granule. It catalyses the reaction S-ubiquitinyl-[E2 ubiquitin-conjugating enzyme]-L-cysteine + [acceptor protein]-L-lysine = [E2 ubiquitin-conjugating enzyme]-L-cysteine + N(6)-ubiquitinyl-[acceptor protein]-L-lysine.. It functions in the pathway protein modification; protein ubiquitination. Functionally, E2-dependent E3 ubiquitin-protein ligase that functions as a RIGI coreceptor in the sensing of viral RNAs in cell cytoplasm and the activation of the antiviral innate immune response. Together with the UBE2D3, UBE2N and UB2V1 E2 ligases, catalyzes the 'Lys-63'-linked polyubiquitination of RIGI oligomerized on viral RNAs, an essential step in the activation of the RIG-I signaling pathway. Through a ubiquitin-independent parallel mechanism, which consists in bridging RIGI filaments forming on longer viral RNAs, further activates the RIG-I signaling pathway. This second mechanism that synergizes with the ubiquitin-dependent one would thereby allow an RNA length-dependent regulation of the RIG-I signaling pathway. Associated with the E2 ligase UBE2N, also constitutively synthesizes unanchored 'Lys-63'-linked polyubiquitin chains that may also activate the RIG-I signaling pathway. The polypeptide is E3 ubiquitin-protein ligase RNF135 (Rattus norvegicus (Rat)).